The following is a 1701-amino-acid chain: DDB1- and CUL4-associated factor homolog 1 (1701 aa).

Positions 224–245 (HAEQSTSNGTSIPSIKITSVDG) are enriched in polar residues. 3 disordered regions span residues 224-269 (HAEQ…RRTE), 883-906 (DRPASRSINTPILNKPLPSSGNNF), and 932-961 (RPSNAASLSSPAMATRSHSTDDDVFATPTL). The LisH domain occupies 851–883 (NQAELLQLIHDHLLKSKLDSVAAMLKSEAKLPD). The span at 888 to 906 (RSINTPILNKPLPSSGNNF) shows a compositional bias: polar residues. WD repeat units follow at residues 1086 to 1125 (DHDESYTKATFSVDDEHLIVGLFNGEVHWINVDTGLDEGH), 1128 to 1169 (CHGS…QRVH), 1171 to 1210 (YREDSCVKFANTTMQRIVGTCRDKATVYDTETNHVLDTYL), and 1215 to 1252 (GLQYEKNYASFSPDDKLIFNDGLLWDVRKKNSAIHVFD). Short sequence motifs (DWD box) lie at residues 1237–1245 (LLWDVRKKN) and 1275–1282 (EVYDIRTF). Disordered regions lie at residues 1384-1559 (IGRL…DINL), 1566-1585 (EARVVENEGNNERPARPVDP), and 1641-1701 (LVRG…DDEA). Acidic residues-rich tracts occupy residues 1390–1423 (NEDENDEEEDEQREDHDEDEDSDESGDGDDDEEI) and 1451–1461 (DDNDTLDDLDF). Residues 1468–1479 (IIRRQAQRRRQR) are compositionally biased toward basic residues. 2 stretches are compositionally biased toward acidic residues: residues 1494–1512 (EGSDEDGDDDEDGEGDPDF) and 1520–1543 (DLVDAVDEEVDEDELGTDGDDDDS). The span at 1567–1581 (ARVVENEGNNERPAR) shows a compositional bias: basic and acidic residues. Positions 1667-1678 (DTDEYQSEEEEI) are enriched in acidic residues.

This sequence belongs to the VPRBP/DCAF1 family. In terms of assembly, component of the cul4-rbx1-ddb1-dcaf1 E3 ubiquitin-protein ligase complex.

Its subcellular location is the nucleus. It functions in the pathway protein modification; protein ubiquitination. Component of the cul4-rbx1-ddb1-dcaf1 E3 ubiquitin-protein ligase complex, dcaf1 may function as the substrate recognition module within this complex. The protein is DDB1- and CUL4-associated factor homolog 1 (dcaf-1) of Caenorhabditis elegans.